We begin with the raw amino-acid sequence, 510 residues long: Guanosine import ATP-binding protein NupO (510 aa).

ABC transporter domains lie at 5-240 (IEML…VGRE) and 257-501 (LAID…AGST). 37 to 44 (GENGAGKS) lines the ATP pocket.

Belongs to the ABC transporter superfamily. The complex is composed of two ATP-binding proteins (NupO), two transmembrane proteins (NupP and NupQ) and a solute-binding protein (NupN).

It is found in the cell membrane. Its function is as follows. Part of an ABC transporter complex involved in the uptake of guanosine. Responsible for energy coupling to the transport system. May be a nucleoside transporter of broad specificity but with various affinities for different substrates. In Bacillus subtilis (strain 168), this protein is Guanosine import ATP-binding protein NupO.